The primary structure comprises 113 residues: MTIAKSVLLFILAAVAEIGGAWLVWQAVREGRAWWWAGLGIIALGLYGFVATLQPDAHFGRILAAYGGVFVAGSLVWGMVFDGFRPDRWDVIGSVICLVGVAVIMFAPRGTTS.

Transmembrane regions (helical) follow at residues valine 7–alanine 27, alanine 33–leucine 53, isoleucine 62–aspartate 82, and valine 91–threonine 111.

This sequence belongs to the UPF0060 family.

It is found in the cell membrane. The sequence is that of UPF0060 membrane protein Arth_4423 from Arthrobacter sp. (strain FB24).